The primary structure comprises 289 residues: MLTRIVLFAITNIAVLILASIVMSLLGVNPTQMSGLLVMALILGFGGSLISLLMSKAIAKHTTGAYVIEQPRNPSQRWLLDTVRRQAEIVGIGMPEVAIYEGPEINAFATGADRNNALVAVSTGLLQNMSQDEAEAVLGHEIAHVANGDMVTMALLQGVLNTFVIVLARVVGGFIDSLLSGNRGGGRGVAYYGIVLVLELLFGLFATIITMWFSRRREFRADEGGAYLAGRNKMIAALERLGINHGQSTLPTQVQAFGIYGGIGEGLRKLFLSHPPLSERIAALRMARE.

Transmembrane regions (helical) follow at residues 5 to 25 (IVLF…VMSL) and 33 to 53 (MSGL…ISLL). His140 is a binding site for Zn(2+). The active site involves Glu141. His144 contributes to the Zn(2+) binding site. Transmembrane regions (helical) follow at residues 155 to 175 (LLQG…GGFI) and 193 to 213 (GIVL…TMWF). Glu218 contacts Zn(2+).

It belongs to the peptidase M48B family. The cofactor is Zn(2+).

The protein localises to the cell inner membrane. The chain is Protease HtpX from Xylella fastidiosa (strain M23).